The sequence spans 155 residues: 6,7-dimethyl-8-ribityllumazine synthase (155 aa).

Residues W22, 56–58 (SYE), and 80–82 (AVI) each bind 5-amino-6-(D-ribitylamino)uracil. Residue 85 to 86 (DT) participates in (2S)-2-hydroxy-3-oxobutyl phosphate binding. Catalysis depends on H88, which acts as the Proton donor. A 5-amino-6-(D-ribitylamino)uracil-binding site is contributed by F113. R127 is a binding site for (2S)-2-hydroxy-3-oxobutyl phosphate.

The protein belongs to the DMRL synthase family.

The catalysed reaction is (2S)-2-hydroxy-3-oxobutyl phosphate + 5-amino-6-(D-ribitylamino)uracil = 6,7-dimethyl-8-(1-D-ribityl)lumazine + phosphate + 2 H2O + H(+). It participates in cofactor biosynthesis; riboflavin biosynthesis; riboflavin from 2-hydroxy-3-oxobutyl phosphate and 5-amino-6-(D-ribitylamino)uracil: step 1/2. In terms of biological role, catalyzes the formation of 6,7-dimethyl-8-ribityllumazine by condensation of 5-amino-6-(D-ribitylamino)uracil with 3,4-dihydroxy-2-butanone 4-phosphate. This is the penultimate step in the biosynthesis of riboflavin. This is 6,7-dimethyl-8-ribityllumazine synthase from Deinococcus radiodurans (strain ATCC 13939 / DSM 20539 / JCM 16871 / CCUG 27074 / LMG 4051 / NBRC 15346 / NCIMB 9279 / VKM B-1422 / R1).